The chain runs to 439 residues: MATKEYFPGIGKIKFEGKDSKNPMAFRYYDAEKMINGRSMKDWLKFAMAWWHTLCAEGGDQFGGGTKQFPWNGDPDPVQAAKNKMDAGFEFMQKMGIGYYCFHDVDLVTEADSIEAYEANLKELVAYAKQKQAETGIKLLWGTANVFSHARYMNGAATNPDFDVVARAAVQIKNAIDATIELGGTNYVFWGGREGYMSLLNTDQKREKEHLAQMLTIARDYGRARGFKGTFLIEPKPMEPTKHQYDVDTETVIGFLKAHGLDQDFKVNIEVNHATLAGHTFEHELAVAVDNGMLGSIDANRGDYQNGWDTDQFPIDNFELTQAMMQIIRNDGLGNGGTNFDAKTRRNSTDPEDIFIAHIAGMDAMARALESAANLLNESPYQKMLSDRYASFDAGKGKEFEEGKLSLEELVAYAKANGEPKQTSGQQELYEALVNIYSL.

Residues H103 and D106 contribute to the active site. The Mg(2+) site is built by E234, E270, H273, D298, D309, D311, and D341.

The protein belongs to the xylose isomerase family. As to quaternary structure, homotetramer. Requires Mg(2+) as cofactor.

It localises to the cytoplasm. It catalyses the reaction alpha-D-xylose = alpha-D-xylulofuranose. This Bacteroides fragilis (strain YCH46) protein is Xylose isomerase.